The chain runs to 162 residues: MLTIKDGTLLIHLLLFSVVALVQLQGAKSARAKNPSKMESKTGENQDRPVLLGGWEDRDPKDEEILELLPSILMKVNEQSNDEYHLMPIKLLKVSSQVVAGVKYKMDVQVARSQCKKSSNEKVDLTKCKKLEGHPEKVMTLEVWEKPWENFMRVEILGTKEV.

The N-terminal stretch at 1 to 32 is a signal peptide; the sequence is MLTIKDGTLLIHLLLFSVVALVQLQGAKSARA. The segment at 30–54 is disordered; it reads ARAKNPSKMESKTGENQDRPVLLGG. The span at 36–47 shows a compositional bias: basic and acidic residues; the sequence is SKMESKTGENQD. The Secondary area of contact motif lies at 97 to 101; sequence QVVAG. The cysteines at positions 115 and 128 are disulfide-linked.

Belongs to the cystatin family. Expressed in the cuticle of L3 and L4 larvae, female adult, and in the eggshell of developing microfilariae.

Functionally, cysteine protease inhibitor which inhibits members of the peptidase C1 family. In the human host, inhibits CTSL/cathepsin L and CTSS/cathepsin S and to a lesser extent CTSB/cathepsin B which may cause defects in antigen processing and thereby impair antigen-driven T cell proliferation. The protein is Onchocystatin of Onchocerca volvulus.